We begin with the raw amino-acid sequence, 326 residues long: NAD kinase (326 aa).

The active-site Proton acceptor is the Asp93. Residues 93–94 (DG), Arg98, 171–172 (NE), Arg182, Asp201, and 212–217 (TAHAFS) contribute to the NAD(+) site.

It belongs to the NAD kinase family. Requires a divalent metal cation as cofactor.

It is found in the cytoplasm. It catalyses the reaction NAD(+) + ATP = ADP + NADP(+) + H(+). Involved in the regulation of the intracellular balance of NAD and NADP, and is a key enzyme in the biosynthesis of NADP. Catalyzes specifically the phosphorylation on 2'-hydroxyl of the adenosine moiety of NAD to yield NADP. In Thermobifida fusca (strain YX), this protein is NAD kinase.